Here is a 205-residue protein sequence, read N- to C-terminus: FMN-dependent NADH:quinone oxidoreductase (205 aa).

FMN contacts are provided by residues S10 and 16–18 (SVS).

The protein belongs to the azoreductase type 1 family. In terms of assembly, homodimer. FMN serves as cofactor.

The enzyme catalyses 2 a quinone + NADH + H(+) = 2 a 1,4-benzosemiquinone + NAD(+). It catalyses the reaction N,N-dimethyl-1,4-phenylenediamine + anthranilate + 2 NAD(+) = 2-(4-dimethylaminophenyl)diazenylbenzoate + 2 NADH + 2 H(+). Its function is as follows. Quinone reductase that provides resistance to thiol-specific stress caused by electrophilic quinones. Also exhibits azoreductase activity. Catalyzes the reductive cleavage of the azo bond in aromatic azo compounds to the corresponding amines. The polypeptide is FMN-dependent NADH:quinone oxidoreductase (Agrobacterium fabrum (strain C58 / ATCC 33970) (Agrobacterium tumefaciens (strain C58))).